We begin with the raw amino-acid sequence, 176 residues long: MAKPTAPCFEDVLGCQAALYEWAESYDTKDWDRLAQCIAPTLRIDYRAFLNKLWEEMPAPEFLLMASDLKFLGNRRLKTQHFVGGASKWLQTSEDEITGQHQMRVAHQKYADDALSEVALKGHAHGHATIWYRRVEGQWRFAGIEPGIRWSEYDHDRIFFEGEEKLGEPQSDECAC.

Substrate-binding residues include Tyr26 and Tyr46. Active-site residues include His81 and His107.

The protein belongs to the scytalone dehydratase family.

Its pathway is secondary metabolite biosynthesis. Its function is as follows. Scytalone dehydratase-like protein; part of the gene cluster that mediates the biosynthesis of the tetrahydroxanthone dimer secalonic acid D. The pathway begins with the synthesis of atrochrysone thioester by the polyketide synthase AacuL. The atrochrysone carboxyl ACP thioesterase AacuM then breaks the thioester bond and releases the atrochrysone carboxylic acid from AacuL. Atrochrysone carboxylic acid is decarboxylated by the decarboxylase AacuI, and oxidized by the anthrone oxygenase AacuG to yield emodin. Emodin is then reduced to emodin hydroquinone by a yet unidentified oxidoreductase. A-ring reduction by the short chain dehydrogenase AacuN, dehydration by the scytalone dehydratase-like protein AacuK and probable spontaneous re-oxidation, results in overall deoxygenation to chrysophanol. Baeyer-Villiger oxidation by the Baeyer-Villiger monooxygenase (BVMO) AacuH then yields monodictyphenone. Monodictyphenone is transformed into compounds with the tetrahydroxanthone skeleton via methylesterification by the methyltransferase AacuQ, followed by the action of the flavin-dependent monooxygenase AacuC, the isomerase AacuP, and the short chain dehydrogenase/reductase AacuF or AacuD. AacuF and AacuD should accept the same compound as a substrate but perform the ketoreduction with a different stereoselectivity, thus yielding blennolides B and A, respectively. In the final step of the biosynthesis, the cytochrome P450 monooxygenase AacuE accepts blennolide B and/or blennolide A to conduct the dimerization reaction to furnish the tetrahydroxanthone dimers, secalonic acids D, B, and F. The protein is Scytalone dehydratase-like protein AacuK of Aspergillus aculeatus (strain ATCC 16872 / CBS 172.66 / WB 5094).